The sequence spans 114 residues: Hydrogenase maturation factor HypA (114 aa).

Histidine 2 serves as a coordination point for Ni(2+). 4 residues coordinate Zn(2+): cysteine 73, cysteine 76, cysteine 89, and cysteine 92.

The protein belongs to the HypA/HybF family.

Its function is as follows. Involved in the maturation of [NiFe] hydrogenases. Required for nickel insertion into the metal center of the hydrogenase. This is Hydrogenase maturation factor HypA from Desulfitobacterium hafniense (strain DSM 10664 / DCB-2).